The primary structure comprises 488 residues: Neisserial heparin binding antigen (488 aa).

The signal sequence occupies residues 1–17; that stretch reads MFKRSVIAMACIFALSA. Cys18 carries N-palmitoyl cysteine lipidation. The S-diacylglycerol cysteine moiety is linked to residue Cys18. The tract at residues 21–201 is disordered; that stretch reads GGGGSPDVKS…NPAPANGGSN (181 aa). Basic and acidic residues predominate over residues 43 to 53; the sequence is SEKETEAKEDA. Over residues 54-70 the composition is skewed to low complexity; it reads PQAGSQGQGAPSAQGSQ. Composition is skewed to polar residues over residues 101 to 118 and 127 to 142; these read DMPQ…NHTP and MENQ…QPAN. A compositionally biased stretch (low complexity) spans 160–183; the sequence is AGGQNAGNTAAQGANQAGNNQAAG. Positions 296 to 306 match the Arg-rich motif motif; the sequence is RFRRSARSRRS. Residues 306-488 form a C1 fragment region; it reads SLPAEMPLIP…GVFAGKKEQD (183 aa).

It belongs to the NHBA family. The C-terminal beta-barrel forms a monomer. Post-translationally, cleaved in vivo by the Neisserial phase-variable autotransporter/serine protease NalP to give 2 fragments. The N-terminus remains in the cell outer membrane while the 22 kDa C-terminus (beginning on Ser-293) is soluble; this soluble fragment is called C2. Cleaved in vitro by human lactoferrin (LTF, between Arg-305 and Ser-306), this fragment is called C1. Cleavage by NalP or lactoferrin does not alter killing of Neisseria by bactericidal antibodies in vitro. Recombinant and cell surface protein is cleaved by human saliva kallikrein (KLK1) between Ser-303 and Arg-304; in saliva kallikrein is more active on NHBA than lactoferrin. Human plasma kallikrein (KLKB1) cleaves in a similar manner to KLK1.

The protein resides in the cell outer membrane. The protein localises to the cell surface. It localises to the host mitochondrion. Its function is as follows. A major human immunogenic protein detected in patients recovering from meningitidis, where it induces bactericidal antibodies. Binds heparin and heparan sulfate proteoglycan in vitro via the Arg-rich motif. Heparin-binding to this protein protects bacteria against killing by bactericidal antibodies (serum killing). Binds to human cells via the Arg-rich region; binding may require the intact protein as protein fragments do not bind to human cells. Protein binding to human cells is abolished by treatment with heparinase III but not chondroitinase ABC. The bacteria binds a number of human extracellular sialyated and/or sulfated glycans via this protein, including chondroitin sulfate (KD=5.2 nM), heparin (KD=52 nM) and ganglioside GT3 (KD=210 nM). The recombinant protein binds DNA non-specifically. Functionally, plays a role in extracellular-DNA (eDNA) mediated biofilm formation. In strain MC58 eDNA stimulates biofilm formation. When NHBA is not processed by NalP there is an increase in positively charged, NHBA- and IgA-derived DNA-binding peptides on the cell surface, resulting in increased DNA-binding peptides and increased biofilm formation. [C2 fragment] Localizes to host mitochondria when applied to the apical side of human endothelial cell layers, where it induces production of reactive oxygen species which lead to increased permeability of host endothelial cells. The C1 fragment (which lacks the first 14 residues of C2) does not have this effect. It is not known if this occurs during Neisseria infections. This chain is Neisserial heparin binding antigen, found in Neisseria meningitidis serogroup B (strain ATCC BAA-335 / MC58).